The primary structure comprises 312 residues: Malate dehydrogenase (312 aa).

NAD(+)-binding positions include Gly10–Gly15 and Asp34. 2 residues coordinate substrate: Arg85 and Arg91. NAD(+) contacts are provided by residues Asn98 and Leu121–Asn123. Substrate is bound by residues Asn123 and Arg154. The active-site Proton acceptor is His178.

This sequence belongs to the LDH/MDH superfamily. MDH type 3 family.

The catalysed reaction is (S)-malate + NAD(+) = oxaloacetate + NADH + H(+). Functionally, catalyzes the reversible oxidation of malate to oxaloacetate. The polypeptide is Malate dehydrogenase (Staphylococcus saprophyticus subsp. saprophyticus (strain ATCC 15305 / DSM 20229 / NCIMB 8711 / NCTC 7292 / S-41)).